The following is a 105-amino-acid chain: Probable tetrachloroethene reductive dehalogenase membrane anchor protein (105 aa).

The next 3 membrane-spanning stretches (helical) occupy residues 3-23 (IYDVLIWMALGMTALLIQYGI), 35-55 (IPLQICGFLANFFFIFALAWG), and 66-86 (AIGMGFIFFGGTALIPAIITY).

Belongs to the PceB family.

The protein resides in the cell membrane. May act as a membrane anchor for the tetrachloroethene reductive dehalogenase PceA. This chain is Probable tetrachloroethene reductive dehalogenase membrane anchor protein, found in Dehalobacter restrictus (strain DSM 9455 / PER-K23).